The following is a 564-amino-acid chain: Lamassu protein LmuB (564 aa).

Functionally, component of antiviral defense system Lamassu type II, composed of LmuA and LmuB. Expression of Lamassu type II in B.subtilis (strain BEST7003) confers resistance to phage SpBeta. May be an ATPase. This Bacillus cereus (strain VD014) protein is Lamassu protein LmuB.